The chain runs to 177 residues: Chorismate pyruvate-lyase (177 aa).

Positions 36, 78, 116, and 157 each coordinate substrate.

It belongs to the UbiC family. In terms of assembly, monomer.

The protein localises to the cytoplasm. It carries out the reaction chorismate = 4-hydroxybenzoate + pyruvate. Its pathway is cofactor biosynthesis; ubiquinone biosynthesis. Removes the pyruvyl group from chorismate, with concomitant aromatization of the ring, to provide 4-hydroxybenzoate (4HB) for the ubiquinone pathway. The protein is Chorismate pyruvate-lyase of Pectobacterium atrosepticum (strain SCRI 1043 / ATCC BAA-672) (Erwinia carotovora subsp. atroseptica).